The sequence spans 686 residues: MADSGNPNENNPSTDTGVNDAVSTSHGDASASYDASAITVLEGLDAVRKRPGMYIGSTGERGLHHLVQEVVDNSVDEALAGHADTIDVTILPDGGVRVVDNGRGIPVGIVPSEGKPAVEVVLTVLHAGGKFGGGGYAVSGGLHGVGVSVVNALSTRVAVEVKTDGYRWTQEYKLGVPTASLARHEATEETGTTVTFWADGDIFETTDYSFETLSRRFQEMAFLNKGLKINLTDERESAKATAGADEAGEDEKHEVKSVSYHYEGGIVDFVTYLNSRKGELVHPTVIDLEAEDKDKSLSLEVAMQWNGGYTEGVYSFANIIHTHEGGTHEEGFRAALTSLINKYARDKKLLREKDDNLTGDDIREGLTAIISVKLAEPQFEGQTKTKLGNTEVKTFVQKVVYEHLTDWLDRNPNEAADIIRKGIQAAHARVAARKARDLTRRKGLLESASLPGKLSDCQSNDPTKCEIFIVEGDSAGGSAKSGRNPQYQAILPIRGKILNVEKARIDRILQNQEIQAMISAFGTGVHEDFDIEKLRYHKIILMADADVDGQHINTLLLTFLFRFMRPLVESGHVYLSRPPLYKIKWGRDDFEYAYSDRERDALIEMGRQAGKRIREDSVQRFKGLGEMNAEELRITTMDQEHRVLGQVTLDDAAQADDLFSVLMGEDVEARRAFIQRNAKDVRFLDI.

Over residues 1 to 27 (MADSGNPNENNPSTDTGVNDAVSTSHG) the composition is skewed to polar residues. Residues 1 to 29 (MADSGNPNENNPSTDTGVNDAVSTSHGDA) form a disordered region. The 115-residue stretch at 465–579 (CEIFIVEGDS…SGHVYLSRPP (115 aa)) folds into the Toprim domain. Residues Glu471, Asp544, and Asp546 each coordinate Mg(2+).

The protein belongs to the type II topoisomerase GyrB family. As to quaternary structure, heterotetramer, composed of two GyrA and two GyrB chains. In the heterotetramer, GyrA contains the active site tyrosine that forms a transient covalent intermediate with DNA, while GyrB binds cofactors and catalyzes ATP hydrolysis. Mg(2+) serves as cofactor. It depends on Mn(2+) as a cofactor. Requires Ca(2+) as cofactor.

The protein localises to the cytoplasm. The enzyme catalyses ATP-dependent breakage, passage and rejoining of double-stranded DNA.. In terms of biological role, a type II topoisomerase that negatively supercoils closed circular double-stranded (ds) DNA in an ATP-dependent manner to modulate DNA topology and maintain chromosomes in an underwound state. Negative supercoiling favors strand separation, and DNA replication, transcription, recombination and repair, all of which involve strand separation. Also able to catalyze the interconversion of other topological isomers of dsDNA rings, including catenanes and knotted rings. Type II topoisomerases break and join 2 DNA strands simultaneously in an ATP-dependent manner. The protein is DNA gyrase subunit B of Streptomyces coelicolor (strain ATCC BAA-471 / A3(2) / M145).